Reading from the N-terminus, the 98-residue chain is Large ribosomal subunit protein uL23c (98 aa).

It belongs to the universal ribosomal protein uL23 family. In terms of assembly, part of the 50S ribosomal subunit.

Its subcellular location is the plastid. Binds to 23S rRNA. The sequence is that of Large ribosomal subunit protein uL23c (rpl23) from Euglena longa (Euglenophycean alga).